A 217-amino-acid polypeptide reads, in one-letter code: Large ribosomal subunit protein uL1 (217 aa).

The protein belongs to the universal ribosomal protein uL1 family. In terms of assembly, part of the 50S ribosomal subunit.

Functionally, binds directly to 23S rRNA. The L1 stalk is quite mobile in the ribosome, and is involved in E site tRNA release. Protein L1 is also a translational repressor protein, it controls the translation of the L11 operon by binding to its mRNA. This Anaplasma marginale (strain St. Maries) protein is Large ribosomal subunit protein uL1.